The chain runs to 92 residues: DNA-directed RNA polymerase subunit omega (92 aa).

Belongs to the RNA polymerase subunit omega family. The RNAP catalytic core consists of 2 alpha, 1 beta, 1 beta' and 1 omega subunit. When a sigma factor is associated with the core the holoenzyme is formed, which can initiate transcription.

The catalysed reaction is RNA(n) + a ribonucleoside 5'-triphosphate = RNA(n+1) + diphosphate. Functionally, promotes RNA polymerase assembly. Latches the N- and C-terminal regions of the beta' subunit thereby facilitating its interaction with the beta and alpha subunits. In Shewanella frigidimarina (strain NCIMB 400), this protein is DNA-directed RNA polymerase subunit omega.